The sequence spans 440 residues: MGALLAKWRAKPSTVEVLEKMEKDIQSLEEFRDKNQKLRKIWVARLFFYSTILYILTSLTVYLWYLPGGMTARLLTTLLFLLFPVLIWFVRTLLILWFSRRTERNNDALELLKAEKKKILEEVMEKETYKAAKIILERFDPDSRKIKELELPVPGPPITPRPGQDLRQRTAAQRNISVSTPVNPGQGSPQVSGLLAATPALQRDTSAPGGPPERSVQPTPQSNILQRRPGSPATAVSGMALHPPGPPLARPILPRERGAMDRVIEYLVGDGPQNRYALICQQCFSHNGMALKEEFEYVAFRCAYCYFLNPARKTRPQAPRLQEISFDRQRQRTDSQGSVNTLQLPAADQLENQQSPEAMEEDSPAQAEEQAIEEQVIEEQVTEEQLIEDQVIEEDSTCSEQQWEEAPDDTEKDNLPAAEVNPSLPAPAANESEESFMETE.

At 1 to 45 (MGALLAKWRAKPSTVEVLEKMEKDIQSLEEFRDKNQKLRKIWVAR) the chain is on the cytoplasmic side. The stretch at 16 to 40 (EVLEKMEKDIQSLEEFRDKNQKLRK) forms a coiled coil. A helical membrane pass occupies residues 46 to 66 (LFFYSTILYILTSLTVYLWYL). The Lumenal segment spans residues 67-77 (PGGMTARLLTT). Residues 78–98 (LLFLLFPVLIWFVRTLLILWF) form a helical membrane-spanning segment. The Cytoplasmic segment spans residues 99 to 440 (SRRTERNNDA…ESEESFMETE (342 aa)). The stretch at 100–128 (RRTERNNDALELLKAEKKKILEEVMEKET) forms a coiled coil. Residues 149–169 (LELPVPGPPITPRPGQDLRQR) are disordered. Position 159 is a phosphothreonine (Thr-159). 4 positions are modified to phosphoserine: Ser-177, Ser-179, Ser-188, and Ser-192. Thr-198 is subject to Phosphothreonine. The interval 202–247 (QRDTSAPGGPPERSVQPTPQSNILQRRPGSPATAVSGMALHPPGPP) is disordered. Phosphoserine is present on residues Ser-206 and Ser-215. The span at 216-225 (VQPTPQSNIL) shows a compositional bias: polar residues. Phosphothreonine is present on Thr-219. A phosphoserine mark is found at Ser-222 and Ser-231. The segment at 280–305 (CQQCFSHNGMALKEEFEYVAFRCAYC) adopts a C4-type; plays a role in ER morphology zinc-finger fold. The tract at residues 316–440 (PQAPRLQEIS…ESEESFMETE (125 aa)) is disordered. Position 325 is a phosphoserine (Ser-325). Positions 334–343 (DSQGSVNTLQ) are enriched in polar residues. Composition is skewed to acidic residues over residues 370–411 (QAIE…DDTE) and 431–440 (ESEESFMETE).

The protein belongs to the lunapark family. As to quaternary structure, homodimer; homodimerization requires the C4-type zinc finger motif and decreases during mitosis in a phosphorylation-dependent manner. Post-translationally, phosphorylated. Phosphorylation at Thr-159 and Ser-325 occurs during interphase. Phosphorylation at Ser-177, Ser-179, Ser-188, Ser-192, Thr-198, Ser-206, Ser-215, Thr-219, Ser-222 and Ser-231 occurs during mitosis; these phosphorylations reduce both its homodimerization and the ER three-way tubular junction formation.

It is found in the endoplasmic reticulum membrane. In terms of biological role, endoplasmic reticulum (ER)-shaping membrane protein that plays a role in determining ER morphology. Involved in the stabilization of nascent three-way ER tubular junctions within the ER network. May also play a role as a curvature-stabilizing protein within three-way ER tubular junction network. The polypeptide is Endoplasmic reticulum junction formation protein lunapark (lnpk) (Xenopus laevis (African clawed frog)).